We begin with the raw amino-acid sequence, 174 residues long: Gamma-crystallin A (174 aa).

2 Beta/gamma crystallin 'Greek key' domains span residues 2–40 (GKIT…RVDS) and 41–83 (GCWM…RSIP). Positions 84–87 (YTSS) are connecting peptide. 2 consecutive Beta/gamma crystallin 'Greek key' domains span residues 88 to 128 (HRIR…HVLE) and 129 to 171 (GCWV…RRVM).

This sequence belongs to the beta/gamma-crystallin family.

Its function is as follows. Crystallins are the dominant structural components of the vertebrate eye lens. This is Gamma-crystallin A (Cryga) from Mus musculus (Mouse).